The following is a 162-amino-acid chain: uncharacterized protein (162 aa).

4 helical membrane passes run 15-35, 43-63, 70-90, and 97-117; these read VLAI…APAL, VCHF…FDLS, LTIL…QSFL, and LFDI…NILY.

It localises to the membrane. This is an uncharacterized protein from Schizosaccharomyces pombe (strain 972 / ATCC 24843) (Fission yeast).